Here is a 144-residue protein sequence, read N- to C-terminus: MSIRERLLATVSRYIAAYNEFDPSAMKTVRTVSCLTHGIAPTCKFTQSVEEHTKHMMLSRGVFRSVNASIVDDGTTVVDEGSRKVVVKVKLRCETIVGPYENEAMFIMAMDEEGTLVDGIFQFLDTACFRQFQGRLEEAHVSRD.

Belongs to the trt14 isomerase family. In terms of assembly, homodimer.

The protein operates within secondary metabolite biosynthesis; terpenoid biosynthesis. In terms of biological role, part of the gene cluster that mediates the biosynthesis of calidodehydroaustin, a fungal meroterpenoid. The first step of the pathway is the synthesis of 3,5-dimethylorsellinic acid by the polyketide synthase ausA. 3,5-dimethylorsellinic acid is then prenylated by the polyprenyl transferase ausN. Further epoxidation by the FAD-dependent monooxygenase ausM and cyclization by the probable terpene cyclase ausL lead to the formation of protoaustinoid A. Protoaustinoid A is then oxidized to spiro-lactone preaustinoid A3 by the combined action of the FAD-binding monooxygenases ausB and ausC, and the dioxygenase ausE. Acid-catalyzed keto-rearrangement and ring contraction of the tetraketide portion of preaustinoid A3 by ausJ lead to the formation of preaustinoid A4. The aldo-keto reductase ausK, with the help of ausH, is involved in the next step by transforming preaustinoid A4 into isoaustinone which is in turn hydroxylated by the P450 monooxygenase ausI to form austinolide. The cytochrome P450 monooxygenase ausG modifies austinolide to austinol. Austinol is further acetylated to austin by the O-acetyltransferase ausP, which spontaneously changes to dehydroaustin. The cytochrome P450 monooxygenase ausR then converts dehydroaustin is into 7-dehydrodehydroaustin. The hydroxylation catalyzed by ausR permits the O-acetyltransferase ausQ to add an additional acetyl group to the molecule, leading to the formation of acetoxydehydroaustin. The short chain dehydrogenase ausT catalyzes the reduction of the double bond present between carbon atoms 1 and 2 to convert 7-dehydrodehydroaustin into 1,2-dihydro-7-hydroxydehydroaustin. AusQ catalyzes not only an acetylation reaction but also the addition of the PKS ausV diketide product to 1,2-dihydro-7-hydroxydehydroaustin, forming precalidodehydroaustin. Finally, the iron/alpha-ketoglutarate-dependent dioxygenase converts precalidodehydroaustin into calidodehydroaustin. AusS is necessary for austinoids production and may play a possible function as a regulator. Its function is as follows. May play a possible function as a regulator. In Aspergillus calidoustus, this protein is Austinoid biosynthesis cluster protein S.